Here is a 1146-residue protein sequence, read N- to C-terminus: Probable transport protein MmpL12 (1146 aa).

A run of 11 helical transmembrane segments spans residues 25-45, 206-226, 254-274, 298-318, 330-350, 382-402, 826-846, 850-870, 883-903, 928-948, and 949-969; these read LIVIGCWIAVAAALTLLLPTL, VSVLIILILVYRNLVTMLVPL, AIVFMSAVMIGAGTDYAVFLI, IGKVITASAATVAVTFLAMVF, AIAVAITVSLLGAVTLLPAIL, TIHLVGSLIVLVALAGCTLLI, FIVIATIVIVFLILVILLRAL, IYLIGSVLISYLSALGIGTLV, LPGLSFILLVAIGADYNMLLI, VITSAGLIFAASMFGLVGASI, and NTMAQAGFTIGIGIVLDTFLV.

It belongs to the resistance-nodulation-cell division (RND) (TC 2.A.6) family. MmpL subfamily.

It is found in the cell membrane. The sequence is that of Probable transport protein MmpL12 (mmpL12) from Mycobacterium tuberculosis (strain CDC 1551 / Oshkosh).